Consider the following 383-residue polypeptide: S-adenosylmethionine:tRNA ribosyltransferase-isomerase (383 aa).

This sequence belongs to the QueA family. In terms of assembly, monomer.

The protein resides in the cytoplasm. It catalyses the reaction 7-aminomethyl-7-carbaguanosine(34) in tRNA + S-adenosyl-L-methionine = epoxyqueuosine(34) in tRNA + adenine + L-methionine + 2 H(+). Its pathway is tRNA modification; tRNA-queuosine biosynthesis. Functionally, transfers and isomerizes the ribose moiety from AdoMet to the 7-aminomethyl group of 7-deazaguanine (preQ1-tRNA) to give epoxyqueuosine (oQ-tRNA). This is S-adenosylmethionine:tRNA ribosyltransferase-isomerase from Rickettsia prowazekii (strain Madrid E).